The primary structure comprises 294 residues: 4-hydroxy-tetrahydrodipicolinate synthase (294 aa).

Threonine 47 contributes to the pyruvate binding site. Catalysis depends on tyrosine 135, which acts as the Proton donor/acceptor. Lysine 163 functions as the Schiff-base intermediate with substrate in the catalytic mechanism. Residue isoleucine 206 participates in pyruvate binding.

This sequence belongs to the DapA family. Homodimer.

It localises to the cytoplasm. It catalyses the reaction L-aspartate 4-semialdehyde + pyruvate = (2S,4S)-4-hydroxy-2,3,4,5-tetrahydrodipicolinate + H2O + H(+). It participates in amino-acid biosynthesis; L-lysine biosynthesis via DAP pathway; (S)-tetrahydrodipicolinate from L-aspartate: step 3/4. Catalyzes the condensation of (S)-aspartate-beta-semialdehyde [(S)-ASA] and pyruvate to 4-hydroxy-tetrahydrodipicolinate (HTPA). This Staphylococcus epidermidis (strain ATCC 35984 / DSM 28319 / BCRC 17069 / CCUG 31568 / BM 3577 / RP62A) protein is 4-hydroxy-tetrahydrodipicolinate synthase.